The chain runs to 118 residues: Crustacean hyperglycemic hormones 2 (118 aa).

A signal peptide spans 1–22 (MTAFRLVAVALVVVVACSTTWA). 3 disulfides stabilise this stretch: C51/C87, C67/C83, and C70/C96. V116 carries the post-translational modification Valine amide.

Belongs to the arthropod CHH/MIH/GIH/VIH hormone family.

The protein resides in the secreted. Hormone found in the sinus gland of isopods and decapods which controls the blood sugar level. Has a secretagogue action over the amylase released from the midgut gland. May act as a stress hormone and may be involved in the control of molting and reproduction. The polypeptide is Crustacean hyperglycemic hormones 2 (CHH2) (Penaeus monodon (Giant tiger prawn)).